We begin with the raw amino-acid sequence, 279 residues long: Zinc finger AN1 and C2H2 domain-containing stress-associated protein 11 (279 aa).

AN1-type zinc fingers lie at residues 7 to 55 and 95 to 145; these read PDLG…REDV and ATKK…KLPF. Zn(2+) is bound by residues C13, C18, C28, C31, C36, H39, H45, C47, C101, C106, C118, C121, C126, H129, H135, and C137. The interval 152-178 is disordered; sequence STTRKEAKTTRPNKAHPSTSSSSSSSR. A compositionally biased stretch (low complexity) spans 169-178; it reads STSSSSSSSR. 2 consecutive C2H2-type zinc fingers follow at residues 213–236 and 250–273; these read EVCP…EKTH and DVCP…ERDH.

In terms of biological role, may be involved in environmental stress response. The protein is Zinc finger AN1 and C2H2 domain-containing stress-associated protein 11 (SAP11) of Arabidopsis thaliana (Mouse-ear cress).